Here is a 111-residue protein sequence, read N- to C-terminus: Cell division protein FtsB (111 aa).

Residues 1 to 3 (MGK) are Cytoplasmic-facing. The helical transmembrane segment at 4–21 (LTLLLLILLGWLQYSLWL) threads the bilayer. The Periplasmic portion of the chain corresponds to 22–111 (GKNGIHDYVR…TNTSSNNTQR (90 aa)). The stretch at 33–63 (KDDVVVQQGNNAKLKDRNEQLFAEIDDLNGG) forms a coiled coil. The interval 88-111 (VPESNHRNANTPSSTNTSSNNTQR) is disordered. A compositionally biased stretch (low complexity) spans 97–111 (NTPSSTNTSSNNTQR).

This sequence belongs to the FtsB family. Part of a complex composed of FtsB, FtsL and FtsQ.

The protein localises to the cell inner membrane. Essential cell division protein. May link together the upstream cell division proteins, which are predominantly cytoplasmic, with the downstream cell division proteins, which are predominantly periplasmic. The chain is Cell division protein FtsB from Pectobacterium atrosepticum (strain SCRI 1043 / ATCC BAA-672) (Erwinia carotovora subsp. atroseptica).